Consider the following 311-residue polypeptide: MNSFLEYTICNRGTNAYSPKAGYHHLDQAFPGPFHTGHASDSYNADGRLYVGGSNQPPTAAAQHQHQNGIYAHHQHQNQTGMGLTYGGTGTTSYGTQACANSDYAQHQYFINPEQDGMYYHSSGFSTSNASPHYGSMAGAYCGAQGAVPAAPYQHHGCEGQDHQRAYSQGTYADLSASQGTEKDTDQPPPGKTFDWMKVKRNPPKTGKVAEYGLGPQNTIRTNFTTKQLTELEKEFHFSKYLTRARRVEIAATLELNETQVKIWFQNRRMKQKKREKEGLAPASSTSSKDLEDQSDHSTSTSPEASPSPDS.

Positions 217–276 form a DNA-binding region, homeobox; the sequence is QNTIRTNFTTKQLTELEKEFHFSKYLTRARRVEIAATLELNETQVKIWFQNRRMKQKKRE. The disordered stretch occupies residues 267 to 311; sequence NRRMKQKKREKEGLAPASSTSSKDLEDQSDHSTSTSPEASPSPDS. The span at 298–311 shows a compositional bias: low complexity; that stretch reads STSTSPEASPSPDS.

The protein belongs to the Antp homeobox family. Labial subfamily.

Its subcellular location is the nucleus. Functionally, sequence-specific transcription factor which is part of a developmental regulatory system that provides cells with specific positional identities on the anterior-posterior axis. The chain is Homeobox protein Hox-B1a (hoxb1a) from Danio rerio (Zebrafish).